We begin with the raw amino-acid sequence, 793 residues long: Toll-like receptor 2 type-1 (793 aa).

The N-terminal stretch at 1–25 (MFNQSKQKPTMKLMWQAWLIYTALA) is a signal peptide. The Extracellular segment spans residues 26 to 597 (AHLPEEQALR…QLSLMECHRS (572 aa)). Cys41 and Cys47 are disulfide-bonded. Asn48 carries N-linked (GlcNAc...) asparagine glycosylation. LRR repeat units follow at residues 64 to 85 (KITV…DLQK), 88 to 109 (NLRT…SFGS), 112 to 133 (KLEL…WFGP), 136 to 157 (SLQH…SPFS), 161 to 182 (NLSS…NFEG), and 185 to 206 (FLNT…SLKS). N-linked (GlcNAc...) asparagine glycosylation is present at Asn120. N-linked (GlcNAc...) asparagine glycosylation is found at Asn161, Asn195, Asn254, and Asn325. Cysteines 362 and 391 form a disulfide. LRR repeat units follow at residues 370-391 (SLLY…ETIC), 397-418 (SLQT…ARYI), 423-444 (KLIN…CEWP), 446-467 (NLKY…IPST), 468-486 (LEVL…LQLP), 487-508 (FLKE…TDIP), and 509-530 (NLVA…EFES). An N-linked (GlcNAc...) asparagine glycan is attached at Asn402. A disulfide bond links Cys441 and Cys463. Residue Asn451 is glycosylated (N-linked (GlcNAc...) asparagine). The LRRCT domain maps to 542–596 (NNFICSCEFLSFIHHEAGIAQVLVGWPESYICDSPLTVRGAQVGSVQLSLMECHR). Residues 598-618 (LLVSLICTLVFLFILILVVVG) form a helical membrane-spanning segment. The Cytoplasmic segment spans residues 619–793 (YKYHAVWYMR…WENLKAALKS (175 aa)). A TIR domain is found at 648–791 (ICYDAFVSYS…MFWENLKAAL (144 aa)).

It belongs to the Toll-like receptor family. As to quaternary structure, binds MYD88 (via TIR domain). In terms of processing, N-glycosylated. TLR2-1 is more heavily glycosylated than TLR2-2. In terms of tissue distribution, highly expressed in ovary. Detected at lower levels in heart, lung, gizzard and testis.

The protein localises to the membrane. Participates in the innate immune response to microbial agents. Acts via MYD88 and TRAF6, leading to NF-kappa-B activation, cytokine secretion and the inflammatory response. Does not respond to LPS and responds with less ability than TLR2-2 to mycoplasmal macrophage-activating lipopeptide-2kD (MALP-2). In Gallus gallus (Chicken), this protein is Toll-like receptor 2 type-1 (TLR2-1).